The primary structure comprises 661 residues: UvrABC system protein B (661 aa).

The region spanning 28-414 is the Helicase ATP-binding domain; the sequence is KGVKEGKRHQ…HTDEMIEQII (387 aa). 41 to 48 provides a ligand contact to ATP; it reads GATGTGKT. Residues 94–117 carry the Beta-hairpin motif; it reads YYDYYQPEAYVPSTDTFIEKDASI. Positions 432–598 constitute a Helicase C-terminal domain; that stretch reads QIDDLLSEIQ…TINKKIHDVI (167 aa). Residues 604–625 form a disordered region; that stretch reads NDETNEKQQTELPKKMTKKERQ. Positions 607–617 are enriched in basic and acidic residues; that stretch reads TNEKQQTELPK. The UVR domain occupies 625–660; sequence QKTIENIEKEMKKAAKDLDFEKATELRDMLFELKSE.

This sequence belongs to the UvrB family. As to quaternary structure, forms a heterotetramer with UvrA during the search for lesions. Interacts with UvrC in an incision complex.

The protein localises to the cytoplasm. Its function is as follows. The UvrABC repair system catalyzes the recognition and processing of DNA lesions. A damage recognition complex composed of 2 UvrA and 2 UvrB subunits scans DNA for abnormalities. Upon binding of the UvrA(2)B(2) complex to a putative damaged site, the DNA wraps around one UvrB monomer. DNA wrap is dependent on ATP binding by UvrB and probably causes local melting of the DNA helix, facilitating insertion of UvrB beta-hairpin between the DNA strands. Then UvrB probes one DNA strand for the presence of a lesion. If a lesion is found the UvrA subunits dissociate and the UvrB-DNA preincision complex is formed. This complex is subsequently bound by UvrC and the second UvrB is released. If no lesion is found, the DNA wraps around the other UvrB subunit that will check the other stand for damage. This chain is UvrABC system protein B, found in Staphylococcus haemolyticus (strain JCSC1435).